A 1409-amino-acid polypeptide reads, in one-letter code: DNA-directed RNA polymerase subunit beta' (1409 aa).

Zn(2+)-binding residues include Cys-70, Cys-72, Cys-85, and Cys-88. Mg(2+) is bound by residues Asp-458, Asp-460, and Asp-462. Cys-813, Cys-887, Cys-894, and Cys-897 together coordinate Zn(2+). Over residues Glu-1385–Ser-1403 the composition is skewed to low complexity. A disordered region spans residues Glu-1385–Glu-1409.

This sequence belongs to the RNA polymerase beta' chain family. The RNAP catalytic core consists of 2 alpha, 1 beta, 1 beta' and 1 omega subunit. When a sigma factor is associated with the core the holoenzyme is formed, which can initiate transcription. The cofactor is Mg(2+). It depends on Zn(2+) as a cofactor.

It catalyses the reaction RNA(n) + a ribonucleoside 5'-triphosphate = RNA(n+1) + diphosphate. Its function is as follows. DNA-dependent RNA polymerase catalyzes the transcription of DNA into RNA using the four ribonucleoside triphosphates as substrates. The chain is DNA-directed RNA polymerase subunit beta' from Variovorax paradoxus (strain S110).